A 684-amino-acid chain; its full sequence is Rabphilin-3A (684 aa).

The tract at residues 1-21 (MTDTVVNRWMYPGDGPLQSND) is disordered. The RabBD domain occupies 40–157 (QRKQEELTDE…KRSGAWFFKG (118 aa)). The FYVE-type zinc-finger motif lies at 88–145 (GDGVNRCILCGEQLGMLGSACVVCEDCKKNVCTKCGVETSNNRPHPVWLCKICLEQRE). Zn(2+) is bound by residues C94, C97, C111, C114, C119, C122, C137, and C140. A disordered region spans residues 162 to 377 (VLPQPMPIKK…EEEEANSYDS (216 aa)). Residues 199–208 (ARGDMEDRRA) show a composition bias toward basic and acidic residues. R223 is subject to Omega-N-methylarginine. Residues 243-252 (RDSEGWDHGH) are compositionally biased toward basic and acidic residues. At S274 the chain carries Phosphoserine. Pro residues predominate over residues 283–299 (ASMPSPAPPQPVQPGPP). Low complexity predominate over residues 301–310 (GSRAAPGPGR). Residues 382 to 504 (TLGALEFSLL…KANQRKNFNI (123 aa)) enclose the C2 1 domain. Positions 412, 413, 419, 474, 475, 476, 482, 529, 571, 577, 631, 632, 633, and 639 each coordinate Ca(2+). The C2 2 domain maps to 540–673 (ERGKILVSLM…NKDKKIERWH (134 aa)). Residues S682 and S683 each carry the phosphoserine modification.

Interacts with RAB3B, RAB3C, RAB3D, RAB8A, RAB27A and RAB27B. Interacts with RAB3A; this interaction recruits RPH3A to synaptic vesicules. Interacts (via C2B domain) with SNAP25. Interacts with deubiquitinating enzyme CAND1; this interaction results in the deubiquitination of RPH3A. Interacts with GRIN2A and DLG4; this ternary complex regulates NMDA receptor composition at postsynaptic membranes. Interacts with SNCA. Ca(2+) serves as cofactor. Post-translationally, ubiquitinated. Deubiquitinated by CAND1 to prevent its degradation. As to expression, specifically expressed in brain.

The protein resides in the cytoplasmic vesicle. The protein localises to the secretory vesicle. It localises to the synaptic vesicle membrane. It is found in the cell projection. Its subcellular location is the dendritic spine. The protein resides in the postsynaptic cell membrane. The protein localises to the membrane. Plays an essential role in docking and fusion steps of regulated exocytosis. At the presynaptic level, RPH3A is recruited by RAB3A to the synaptic vesicle membrane in a GTP-dependent manner where it modulates synaptic vesicle trafficking and calcium-triggered neurotransmitter release. In the post-synaptic compartment, forms a ternary complex with GRIN2A and DLG4 and regulates NMDA receptor stability. Also plays a role in the exocytosis of arginine vasopressin hormone. The chain is Rabphilin-3A (Rph3a) from Rattus norvegicus (Rat).